A 172-amino-acid polypeptide reads, in one-letter code: Methylated-DNA--protein-cysteine methyltransferase (172 aa).

Cys-142 acts as the Nucleophile; methyl group acceptor in catalysis.

It belongs to the MGMT family.

The protein resides in the cytoplasm. It catalyses the reaction a 6-O-methyl-2'-deoxyguanosine in DNA + L-cysteinyl-[protein] = S-methyl-L-cysteinyl-[protein] + a 2'-deoxyguanosine in DNA. It carries out the reaction a 4-O-methyl-thymidine in DNA + L-cysteinyl-[protein] = a thymidine in DNA + S-methyl-L-cysteinyl-[protein]. Involved in the cellular defense against the biological effects of O6-methylguanine (O6-MeG) and O4-methylthymine (O4-MeT) in DNA. Repairs the methylated nucleobase in DNA by stoichiometrically transferring the methyl group to a cysteine residue in the enzyme. This is a suicide reaction: the enzyme is irreversibly inactivated. This Pyrococcus abyssi (strain GE5 / Orsay) protein is Methylated-DNA--protein-cysteine methyltransferase.